Here is a 214-residue protein sequence, read N- to C-terminus: tRNA (guanine-N(7)-)-methyltransferase (214 aa).

Glu43, Glu68, Asp95, and Asp117 together coordinate S-adenosyl-L-methionine. Residue Asp117 is part of the active site. Residues Lys121, Asp153, and 190 to 193 (TEYE) contribute to the substrate site.

It belongs to the class I-like SAM-binding methyltransferase superfamily. TrmB family.

The catalysed reaction is guanosine(46) in tRNA + S-adenosyl-L-methionine = N(7)-methylguanosine(46) in tRNA + S-adenosyl-L-homocysteine. The protein operates within tRNA modification; N(7)-methylguanine-tRNA biosynthesis. Catalyzes the formation of N(7)-methylguanine at position 46 (m7G46) in tRNA. This Staphylococcus aureus (strain Mu3 / ATCC 700698) protein is tRNA (guanine-N(7)-)-methyltransferase.